The following is a 213-amino-acid chain: Peptide methionine sulfoxide reductase MsrA (213 aa).

Cys-52 is a catalytic residue.

This sequence belongs to the MsrA Met sulfoxide reductase family.

The catalysed reaction is L-methionyl-[protein] + [thioredoxin]-disulfide + H2O = L-methionyl-(S)-S-oxide-[protein] + [thioredoxin]-dithiol. The enzyme catalyses [thioredoxin]-disulfide + L-methionine + H2O = L-methionine (S)-S-oxide + [thioredoxin]-dithiol. In terms of biological role, has an important function as a repair enzyme for proteins that have been inactivated by oxidation. Catalyzes the reversible oxidation-reduction of methionine sulfoxide in proteins to methionine. This is Peptide methionine sulfoxide reductase MsrA from Enterobacter sp. (strain 638).